The following is a 269-amino-acid chain: MHQDYRELSLDELESVEKQTLRTIVQALQQYSKEAKSIFETTAADSSGEVIVLAEDITQYALEVAETYPINRRFAGFIDYKRVRWLPSPHGLLPQVLLVDAKASTEKNRDTLQRSQLPMDAEFRNTSSGEVVTMEAGVIPHLMLQSANDGVLPAVTTSIFVHFYYRELKDVEGRYRELKSIYVLSLPHARLKQRYNPDPDTSFFGAGKHSPARGEVARIRVYFDRLKEACPWRLQELHYSADSEYTQPRWRDLNDAGHEVTKEFLFLER.

It carries out the reaction Endonucleolytic cleavage of DNA to give specific double-stranded fragments with terminal 5'-phosphates.. Its function is as follows. An F and P subtype restriction enzyme that recognizes the double-stranded sequence 5'-GGCCN(5)GGCC-3' and cleaves before N-9. This is Type II restriction enzyme SfiI (sfiIR) from Streptomyces fimbriatus.